Reading from the N-terminus, the 599-residue chain is Aspartate--tRNA(Asp/Asn) ligase (599 aa).

Glu173 contacts L-aspartate. The tract at residues 197–200 (QLFK) is aspartate. Arg219 is a binding site for L-aspartate. Residues 219–221 (RDE) and Gln228 each bind ATP. His449 lines the L-aspartate pocket. Glu482 contacts ATP. Arg489 serves as a coordination point for L-aspartate. 534–537 (GLDR) lines the ATP pocket.

It belongs to the class-II aminoacyl-tRNA synthetase family. Type 1 subfamily. As to quaternary structure, homodimer.

The protein localises to the cytoplasm. It carries out the reaction tRNA(Asx) + L-aspartate + ATP = L-aspartyl-tRNA(Asx) + AMP + diphosphate. In terms of biological role, aspartyl-tRNA synthetase with relaxed tRNA specificity since it is able to aspartylate not only its cognate tRNA(Asp) but also tRNA(Asn). Reaction proceeds in two steps: L-aspartate is first activated by ATP to form Asp-AMP and then transferred to the acceptor end of tRNA(Asp/Asn). The polypeptide is Aspartate--tRNA(Asp/Asn) ligase (Marinobacter nauticus (strain ATCC 700491 / DSM 11845 / VT8) (Marinobacter aquaeolei)).